We begin with the raw amino-acid sequence, 77 residues long: U11-lycotoxin-Ls1d (77 aa).

The signal sequence occupies residues 1 to 20 (MKLIIFTGLVLFAIVSLIEA). A propeptide spanning residues 21 to 26 (EEESGR) is cleaved from the precursor.

The protein belongs to the neurotoxin 19 (CSTX) family. 10 (U11-Lctx) subfamily. Contains 4 disulfide bonds. In terms of tissue distribution, expressed by the venom gland.

It is found in the secreted. This is U11-lycotoxin-Ls1d from Lycosa singoriensis (Wolf spider).